A 357-amino-acid polypeptide reads, in one-letter code: Chorismate synthase (357 aa).

An NADP(+)-binding site is contributed by arginine 47. Residues 123–125 (RSS), glycine 281, 296–300 (KPTSS), and arginine 324 contribute to the FMN site.

This sequence belongs to the chorismate synthase family. In terms of assembly, homotetramer. The cofactor is FMNH2.

It carries out the reaction 5-O-(1-carboxyvinyl)-3-phosphoshikimate = chorismate + phosphate. Its pathway is metabolic intermediate biosynthesis; chorismate biosynthesis; chorismate from D-erythrose 4-phosphate and phosphoenolpyruvate: step 7/7. Functionally, catalyzes the anti-1,4-elimination of the C-3 phosphate and the C-6 proR hydrogen from 5-enolpyruvylshikimate-3-phosphate (EPSP) to yield chorismate, which is the branch point compound that serves as the starting substrate for the three terminal pathways of aromatic amino acid biosynthesis. This reaction introduces a second double bond into the aromatic ring system. This Chlamydia muridarum (strain MoPn / Nigg) protein is Chorismate synthase.